The sequence spans 92 residues: Small ribosomal subunit protein uS19 (92 aa).

This sequence belongs to the universal ribosomal protein uS19 family.

Protein S19 forms a complex with S13 that binds strongly to the 16S ribosomal RNA. The sequence is that of Small ribosomal subunit protein uS19 from Ruegeria pomeroyi (strain ATCC 700808 / DSM 15171 / DSS-3) (Silicibacter pomeroyi).